We begin with the raw amino-acid sequence, 431 residues long: Adenylosuccinate synthetase (431 aa).

Residues 13 to 19 (GDEGKGK) and 41 to 43 (GHT) each bind GTP. Catalysis depends on Asp-14, which acts as the Proton acceptor. Mg(2+) is bound by residues Asp-14 and Gly-41. Residues 14-17 (DEGK), 39-42 (NAGH), Thr-130, Arg-144, Gln-225, Thr-240, and Arg-304 each bind IMP. His-42 functions as the Proton donor in the catalytic mechanism. Residue 300 to 306 (AVTGRPR) coordinates substrate. Residues Arg-306, 332–334 (KLD), and 415–417 (STG) each bind GTP.

The protein belongs to the adenylosuccinate synthetase family. In terms of assembly, homodimer. Requires Mg(2+) as cofactor.

Its subcellular location is the cytoplasm. The catalysed reaction is IMP + L-aspartate + GTP = N(6)-(1,2-dicarboxyethyl)-AMP + GDP + phosphate + 2 H(+). Its pathway is purine metabolism; AMP biosynthesis via de novo pathway; AMP from IMP: step 1/2. Its function is as follows. Plays an important role in the de novo pathway of purine nucleotide biosynthesis. Catalyzes the first committed step in the biosynthesis of AMP from IMP. The protein is Adenylosuccinate synthetase of Legionella pneumophila (strain Paris).